We begin with the raw amino-acid sequence, 738 residues long: Elongation factor G, mitochondrial (738 aa).

The interval 1 to 20 (MCIGPAPTPETEEELPPSPQ) is disordered. Residues 32 to 320 (RFQRNIGVSA…GVCAYLPNPA (289 aa)) enclose the tr-type G domain. GTP is bound by residues 41-48 (AHIDSGKT), 118-122 (DTPGH), and 172-175 (NKMD).

Belongs to the TRAFAC class translation factor GTPase superfamily. Classic translation factor GTPase family. EF-G/EF-2 subfamily.

It localises to the mitochondrion. It functions in the pathway protein biosynthesis; polypeptide chain elongation. Its function is as follows. Mitochondrial GTPase that catalyzes the GTP-dependent ribosomal translocation step during translation elongation. During this step, the ribosome changes from the pre-translocational (PRE) to the post-translocational (POST) state as the newly formed A-site-bound peptidyl-tRNA and P-site-bound deacylated tRNA move to the P and E sites, respectively. Catalyzes the coordinated movement of the two tRNA molecules, the mRNA and conformational changes in the ribosome. The chain is Elongation factor G, mitochondrial from Laccaria bicolor (strain S238N-H82 / ATCC MYA-4686) (Bicoloured deceiver).